The sequence spans 370 residues: uncharacterized protein (370 aa).

The a divalent metal cation site is built by Asp152, His154, Asp184, Asn215, His306, and His308.

It belongs to the metallophosphoesterase superfamily. Requires a divalent metal cation as cofactor.

This is an uncharacterized protein from Helicobacter pylori (strain ATCC 700392 / 26695) (Campylobacter pylori).